A 178-amino-acid polypeptide reads, in one-letter code: Dual-action ribosomal maturation protein DarP (178 aa).

Belongs to the DarP family.

Its subcellular location is the cytoplasm. In terms of biological role, member of a network of 50S ribosomal subunit biogenesis factors which assembles along the 30S-50S interface, preventing incorrect 23S rRNA structures from forming. Promotes peptidyl transferase center (PTC) maturation. In Mannheimia succiniciproducens (strain KCTC 0769BP / MBEL55E), this protein is Dual-action ribosomal maturation protein DarP.